The following is a 520-amino-acid chain: DDB1- and CUL4-associated factor 17 (520 aa).

A run of 2 helical transmembrane segments spans residues 186 to 206 (VLLY…ILEI) and 222 to 242 (GILI…QTIA).

In terms of assembly, interacts with DDB1, CUL4A and CUL4B. In terms of tissue distribution, ubiquitously expressed.

Its subcellular location is the membrane. It is found in the nucleus. The protein resides in the nucleolus. Its pathway is protein modification; protein ubiquitination. May function as a substrate receptor for CUL4-DDB1 E3 ubiquitin-protein ligase complex. This chain is DDB1- and CUL4-associated factor 17 (DCAF17), found in Homo sapiens (Human).